The following is an 842-amino-acid chain: MutS protein homolog him-14 (842 aa).

The disordered stretch occupies residues 1-21; it reads MYSNKSFQRRQRQQVAESRSE. An ATP-binding site is contributed by 588–595; the sequence is GPNMAGKS.

The protein belongs to the DNA mismatch repair MutS family. As to quaternary structure, heterooligomer of him-14 and msh-5.

The protein localises to the nucleus. In terms of biological role, required during the pachytene stage of meiotic prophase for the formation of crossovers between homologous chromosomes. Together with msh-5 and zhp-3 plays a role in the activation of DNA damage-dependent apoptosis at the DNA damage checkpoint in pachytene cells. Not needed for pairing or synapsis. May promote crossing over by interfering with Holliday junction branch migration. Has no apparent role in DNA mismatch repair. The sequence is that of MutS protein homolog him-14 from Caenorhabditis elegans.